Reading from the N-terminus, the 57-residue chain is Ribulose bisphosphate carboxylase large chain (57 aa).

Residues 1–2 (MS) constitute a propeptide that is removed on maturation. Pro-3 carries the N-acetylproline modification. Lys-14 carries the post-translational modification N6,N6,N6-trimethyllysine.

It belongs to the RuBisCO large chain family. Type I subfamily. As to quaternary structure, heterohexadecamer of 8 large chains and 8 small chains.

The protein resides in the plastid. It is found in the chloroplast. It catalyses the reaction 2 (2R)-3-phosphoglycerate + 2 H(+) = D-ribulose 1,5-bisphosphate + CO2 + H2O. The enzyme catalyses D-ribulose 1,5-bisphosphate + O2 = 2-phosphoglycolate + (2R)-3-phosphoglycerate + 2 H(+). Functionally, ruBisCO catalyzes two reactions: the carboxylation of D-ribulose 1,5-bisphosphate, the primary event in carbon dioxide fixation, as well as the oxidative fragmentation of the pentose substrate in the photorespiration process. Both reactions occur simultaneously and in competition at the same active site. In Buxus sempervirens (Common box), this protein is Ribulose bisphosphate carboxylase large chain (rbcL).